The chain runs to 384 residues: MSSYLFTSESVSEGHPDKIADQISDAVLDEILKQDPKARVACETYVKTGMALVGGEITTSAWVDIENLTRKVICDIGYEHSEMGFDGHSCAVLNAIGKQSADINQGVDRENPLDQGAGDQGIMFGYATNETDVLMPAAITYAHRLMEKQAEVRKSGKLAWLRPDAKSQVTLKYEDNKIVGVDAVVLSTQHSEEVSQKDLHEGVMEEIIKPVLPTEWLSKETKFFINPTGRFVIGGPMGDCGLTGRKIIVDTYGGAARHGGGAFSGKDPSKVDRSAAYAARYVAKNIVAAGLADRCEIQLSYAIGVADPTSIMVETFGTGKVANELLVSLVREFFDLRPYGLIKMLDLIQPIYRETAAYGHFGREQFPWEKVDHAEDLRIAAGLK.

His15 contacts ATP. Mg(2+) is bound at residue Asp17. K(+) is bound at residue Glu43. 2 residues coordinate L-methionine: Glu56 and Gln99. The flexible loop stretch occupies residues 99-109 (QSADINQGVDR). ATP-binding positions include 164 to 166 (DAK), 230 to 231 (RF), Asp239, 245 to 246 (RK), Ala262, and Lys266. Position 239 (Asp239) interacts with L-methionine. Position 270 (Lys270) interacts with L-methionine.

It belongs to the AdoMet synthase family. Homotetramer; dimer of dimers. It depends on Mg(2+) as a cofactor. K(+) serves as cofactor.

The protein resides in the cytoplasm. The catalysed reaction is L-methionine + ATP + H2O = S-adenosyl-L-methionine + phosphate + diphosphate. It functions in the pathway amino-acid biosynthesis; S-adenosyl-L-methionine biosynthesis; S-adenosyl-L-methionine from L-methionine: step 1/1. In terms of biological role, catalyzes the formation of S-adenosylmethionine (AdoMet) from methionine and ATP. The overall synthetic reaction is composed of two sequential steps, AdoMet formation and the subsequent tripolyphosphate hydrolysis which occurs prior to release of AdoMet from the enzyme. The sequence is that of S-adenosylmethionine synthase from Haemophilus influenzae (strain PittEE).